The chain runs to 1854 residues: PKS-NRPS hybrid synthetase ATPKS (1854 aa).

Positions 24–423 are adenylation (A) domain; sequence FDQTQTRYSP…GRADTQIKIR (400 aa). Residues 523–598 enclose the Carrier 1 domain; sequence IPASTLTQQL…NLAAYLSDQT (76 aa). Ser558 is modified (O-(pantetheine 4'-phosphoryl)serine). Positions 617–1049 constitute a Ketosynthase family 3 (KS3) domain; that stretch reads GEDIAVISMA…GTNAHAIIEE (433 aa). Active-site for beta-ketoacyl synthase activity residues include Cys791, His926, and His967. Residues 1162–1496 are malonyl-CoA:ACP transacylase (MAT) domain; the sequence is LFSGQGTERA…SLSDLHIRKV (335 aa). The interval 1536–1556 is disordered; the sequence is KSSGQPSGQSPSGCPQPTGQI. Residues 1537–1555 show a composition bias toward low complexity; the sequence is SSGQPSGQSPSGCPQPTGQ. One can recognise a Carrier 2 domain in the interval 1776-1851; that stretch reads MMLQGLVRGI…SLSDALQKQV (76 aa). O-(pantetheine 4'-phosphoryl)serine is present on Ser1811.

This sequence in the C-terminal section; belongs to the NRP synthetase family.

Its pathway is secondary metabolite biosynthesis. In terms of biological role, PKS-NRPS hybrid synthetase; part of the gene cluster that mediates the biosynthesis of pyrophen and campyrone B, which represent a class of fungal amino acid-derived alpha-pyrone natural products. The first step of pyrophen biosynthesis is catalyzed by the PKS-NRPS hybrid synthetase ATPKS that uptakes and condensates L-phenylalanine and malonyl-CoA in order to produce desmethyldesacetylpyrophen. Although the A domain does not discriminate between 2 enantiomeric phenylalanines, the downstream KS domain must play a gate keeping role to stereoselectively accept the L-phenylalanyl-S-phosphopantetheine (Ppant)-T domain intermediate for chain elongation. The resulting amino acid derived diketide is off-loaded through lactonization to yield the alpha-pyrone intermediate desmethyldesacetylpyrophen. The cluster-specific O-methyltransferase (OMT) then methylates desmethyldesacetylpyrophen to desacetylpyrophen, which is further acetylated to pyrophen by an endogenous yet unidentified N-acetyltransferase. ATPKS has relaxed substrate specificity to activate and extend branched-chain amino acid L-leucine to produce small amounts of campyrone B. In Aspergillus niger (strain ATCC 1015 / CBS 113.46 / FGSC A1144 / LSHB Ac4 / NCTC 3858a / NRRL 328 / USDA 3528.7), this protein is PKS-NRPS hybrid synthetase ATPKS.